We begin with the raw amino-acid sequence, 412 residues long: Eukaryotic initiation factor 4A-1 (412 aa).

Residue A2 is modified to N-acetylalanine. Residues 39-67 (ESFDAMGLQENLLRGIYAYGFEKPSAIQQ) carry the Q motif motif. Positions 70 to 240 (IVPFCKGLDV…RKFMSKPVRI (171 aa)) constitute a Helicase ATP-binding domain. 83–90 (AQSGTGKT) provides a ligand contact to ATP. S104 is subject to Phosphoserine. T145 is subject to Phosphothreonine. The short motif at 188-191 (DEAD) is the DEAD box element. The 162-residue stretch at 251–412 (GIKQFYVNVE…ELPSNVADLL (162 aa)) folds into the Helicase C-terminal domain.

This sequence belongs to the DEAD box helicase family. eIF4A subfamily. As to quaternary structure, eIF4F is a multi-subunit complex, the composition of which varies with external and internal environmental conditions. It is composed of at least EIF4A, EIF4E and EIF4G. Interacts with CDKA-1. Interacts with MRF1, MRF2, MRF3/ECIP1 and MRF4. In terms of tissue distribution, highly expressed in the whole plant.

Its subcellular location is the cytoplasm. It catalyses the reaction ATP + H2O = ADP + phosphate + H(+). ATP-dependent RNA helicase which is a subunit of the eIF4F complex involved in cap recognition and is required for mRNA binding to ribosome. In the current model of translation initiation, eIF4A unwinds RNA secondary structures in the 5'-UTR of mRNAs which is necessary to allow efficient binding of the small ribosomal subunit, and subsequent scanning for the initiator codon. The polypeptide is Eukaryotic initiation factor 4A-1 (Arabidopsis thaliana (Mouse-ear cress)).